Consider the following 268-residue polypeptide: Adenosylcobinamide-GDP ribazoletransferase (268 aa).

Helical transmembrane passes span 1–21 (MAGN…TLPV), 36–56 (YLFI…GTLF), 59–79 (ILPA…LTGI), 112–132 (AGGL…AMTF), 138–158 (WLFV…ITII), 182–202 (LAAV…AAII), 212–232 (IMAG…ILII), and 244–264 (VIGA…GAVL).

It belongs to the CobS family. It depends on Mg(2+) as a cofactor.

It localises to the cell membrane. The catalysed reaction is alpha-ribazole + adenosylcob(III)inamide-GDP = adenosylcob(III)alamin + GMP + H(+). It catalyses the reaction alpha-ribazole 5'-phosphate + adenosylcob(III)inamide-GDP = adenosylcob(III)alamin 5'-phosphate + GMP + H(+). It functions in the pathway cofactor biosynthesis; adenosylcobalamin biosynthesis; adenosylcobalamin from cob(II)yrinate a,c-diamide: step 7/7. Joins adenosylcobinamide-GDP and alpha-ribazole to generate adenosylcobalamin (Ado-cobalamin). Also synthesizes adenosylcobalamin 5'-phosphate from adenosylcobinamide-GDP and alpha-ribazole 5'-phosphate. The protein is Adenosylcobinamide-GDP ribazoletransferase of Methanocella arvoryzae (strain DSM 22066 / NBRC 105507 / MRE50).